Here is a 415-residue protein sequence, read N- to C-terminus: Histidine--tRNA ligase (415 aa).

This sequence belongs to the class-II aminoacyl-tRNA synthetase family. In terms of assembly, homodimer.

Its subcellular location is the cytoplasm. It carries out the reaction tRNA(His) + L-histidine + ATP = L-histidyl-tRNA(His) + AMP + diphosphate + H(+). This chain is Histidine--tRNA ligase, found in Rickettsia akari (strain Hartford).